We begin with the raw amino-acid sequence, 458 residues long: Phosphoglucosamine mutase (458 aa).

Residue Ser-106 is the Phosphoserine intermediate of the active site. Mg(2+)-binding residues include Ser-106, Asp-247, Asp-249, and Asp-251. Ser-106 is modified (phosphoserine).

The protein belongs to the phosphohexose mutase family. It depends on Mg(2+) as a cofactor. In terms of processing, activated by phosphorylation.

The enzyme catalyses alpha-D-glucosamine 1-phosphate = D-glucosamine 6-phosphate. In terms of biological role, catalyzes the conversion of glucosamine-6-phosphate to glucosamine-1-phosphate. In Chlamydia trachomatis serovar A (strain ATCC VR-571B / DSM 19440 / HAR-13), this protein is Phosphoglucosamine mutase.